The following is a 440-amino-acid chain: Beta-1,3-galactosyl-O-glycosyl-glycoprotein beta-1,6-N-acetylglucosaminyltransferase 3 (440 aa).

The Cytoplasmic segment spans residues 1-12 (MKMTGWKKKLCR). A helical; Signal-anchor for type II membrane protein membrane pass occupies residues 13–30 (GHHLWALGCYMLLAVVAL). Topologically, residues 31–440 (RLSLRLKCDV…RHKAIYGTEL (410 aa)) are lumenal. Residues N72 and N108 are each glycosylated (N-linked (GlcNAc...) asparagine). Cystine bridges form between C73-C230, C164-C384, C185-C212, and C393-C425.

The protein belongs to the glycosyltransferase 14 family. Post-translationally, N-glycosylated. In terms of tissue distribution, primarily expressed in mucus-secreting tissues.

The protein resides in the golgi apparatus membrane. The catalysed reaction is a 3-O-[beta-D-galactosyl-(1-&gt;3)-N-acetyl-alpha-D-galactosaminyl]-L-seryl-[protein] + UDP-N-acetyl-alpha-D-glucosamine = 3-O-{beta-D-galactosyl-(1-&gt;3)-[N-acetyl-beta-D-glucosaminyl-(1-&gt;6)]-N-acetyl-alpha-D-galactosaminyl}-L-seryl-[protein] + UDP + H(+). The enzyme catalyses a 3-O-[beta-D-galactosyl-(1-&gt;3)-N-acetyl-alpha-D-galactosaminyl]-L-threonyl-[protein] + UDP-N-acetyl-alpha-D-glucosamine = a 3-O-{beta-D-galactosyl-(1-&gt;3)-[N-acetyl-beta-D-glucosaminyl-(1-&gt;6)]-N-acetyl-alpha-D-galactosaminyl}-L-threonyl-[protein] + UDP + H(+). It carries out the reaction a beta-D-Gal-(1-&gt;4)-beta-D-GlcNAc-(1-&gt;3)-beta-D-Gal-(1-&gt;4)-beta-D-GlcNAc derivative + UDP-N-acetyl-alpha-D-glucosamine = a beta-D-Gal-(1-&gt;4)-beta-D-GlcNAc-(1-&gt;3)-[beta-D-GlcNAc-(1-&gt;6)]-beta-D-Gal-(1-&gt;4)-N-acetyl-beta-D-glucosaminyl derivative + UDP + H(+). It catalyses the reaction 3-O-[N-acetyl-beta-D-glucosaminyl-(1-&gt;3)-N-acetyl-alpha-D-galactosaminyl]-L-seryl-[protein] + UDP-N-acetyl-alpha-D-glucosamine = 3-O-[N-acetyl-beta-D-glucosaminyl-(1-&gt;3)-[N-acetyl-beta-D-glucosaminyl-(1-&gt;6)]-N-acetyl-alpha-D-galactosaminyl]-L-seryl-[protein] + UDP + H(+). The catalysed reaction is a 3-O-[N-acetyl-beta-D-glucosaminyl-(1-&gt;3)-N-acetyl-alpha-D-galactosaminyl]-L-threonyl-[protein] + UDP-N-acetyl-alpha-D-glucosamine = 3-O-[N-acetyl-beta-D-glucosaminyl-(1-&gt;3)-[N-acetyl-beta-D-glucosaminyl-(1-&gt;6)]-N-acetyl-alpha-D-galactosaminyl]-L-threonyl-[protein] + UDP + H(+). It functions in the pathway protein modification; protein glycosylation. In terms of biological role, glycosyltransferase that can synthesize all known mucin beta 6 N-acetylglucosaminides. Mediates core 2 and core 4 O-glycan branching, 2 important steps in mucin-type biosynthesis. Also has I-branching enzyme activity by converting linear into branched poly-N-acetyllactosaminoglycans, leading to introduce the blood group I antigen during embryonic development. The sequence is that of Beta-1,3-galactosyl-O-glycosyl-glycoprotein beta-1,6-N-acetylglucosaminyltransferase 3 (GCNT3) from Bos taurus (Bovine).